A 106-amino-acid polypeptide reads, in one-letter code: Toxin-like structure LSTX-D9 (106 aa).

The N-terminal stretch at 1–20 (MMKVLVVVALLLTLIIYSSS) is a signal peptide. The propeptide occupies 21–41 (DGIDDLEADELVSLMAHEQTR). 4 disulfide bridges follow: Cys45–Cys60, Cys52–Cys69, Cys59–Cys85, and Cys71–Cys83.

This sequence belongs to the neurotoxin 19 (CSTX) family. 02 (D7) subfamily. As to expression, expressed by the venom gland.

The protein resides in the secreted. This chain is Toxin-like structure LSTX-D9, found in Lycosa singoriensis (Wolf spider).